The sequence spans 224 residues: MAIRDWPEDARPREKLLKQGAAALTDAELVAVFLRTGVAGKSAVDLGRDLIERFGGLGALCRADRVAACRAPGVGEAKYALLQAVMEMARRTLAEDMQAGDALSSPAAVRDYLRLILRDKEYEVFCCVFLNAQNRVIAVEELFRGTLTQTSVYPREIVKRALAHNAAAMILAHNHPSGVNEPSQADRSLTRRLAEALALVDIRVLDHFIIAGASALSFAEAGHL.

Residues 102–224 (ALSSPAAVRD…ALSFAEAGHL (123 aa)) form the MPN domain. Zn(2+) contacts are provided by His-173, His-175, and Asp-186. Residues 173–186 (HNHPSGVNEPSQAD) carry the JAMM motif motif.

Belongs to the UPF0758 family.

The sequence is that of UPF0758 protein Tbd_2588 from Thiobacillus denitrificans (strain ATCC 25259 / T1).